Reading from the N-terminus, the 490-residue chain is Cysteine desulfurase, mitochondrial (490 aa).

Residues 161 to 162 (AT), Asn-241, Gln-269, and 289 to 291 (SSH) contribute to the pyridoxal 5'-phosphate site. Lys-292 carries the post-translational modification N6-(pyridoxal phosphate)lysine. Position 329 (Thr-329) interacts with pyridoxal 5'-phosphate. Cys-414 (cysteine persulfide intermediate) is an active-site residue. Position 414 (Cys-414) interacts with [2Fe-2S] cluster.

The protein belongs to the class-V pyridoxal-phosphate-dependent aminotransferase family. NifS/IscS subfamily. Pyridoxal 5'-phosphate serves as cofactor.

It is found in the mitochondrion. The enzyme catalyses (sulfur carrier)-H + L-cysteine = (sulfur carrier)-SH + L-alanine. In terms of biological role, catalyzes the removal of elemental sulfur from cysteine to produce alanine. It supplies the inorganic sulfur for iron-sulfur (Fe-S) clusters. Plays a role in both tRNA-processing and mitochondrial metabolism. Involved in the 2-thio-modification of both 5-carboxymethylaminomethyl-2-thiouridine in mitochondrial tRNAs and 5-methoxycarbonylmethyl-2-thiouridine (mcm5s2U) in cytoplasmic tRNAs. This is Cysteine desulfurase, mitochondrial from Eremothecium gossypii (strain ATCC 10895 / CBS 109.51 / FGSC 9923 / NRRL Y-1056) (Yeast).